The primary structure comprises 177 residues: Large ribosomal subunit protein uL6 (177 aa).

This sequence belongs to the universal ribosomal protein uL6 family. In terms of assembly, part of the 50S ribosomal subunit.

Its function is as follows. This protein binds to the 23S rRNA, and is important in its secondary structure. It is located near the subunit interface in the base of the L7/L12 stalk, and near the tRNA binding site of the peptidyltransferase center. In Yersinia enterocolitica serotype O:8 / biotype 1B (strain NCTC 13174 / 8081), this protein is Large ribosomal subunit protein uL6.